We begin with the raw amino-acid sequence, 159 residues long: ATP synthase subunit b (159 aa).

Residues 7-27 traverse the membrane as a helical segment; it reads DFIWTLINFFVLLFILKILLY.

This sequence belongs to the ATPase B chain family. As to quaternary structure, F-type ATPases have 2 components, F(1) - the catalytic core - and F(0) - the membrane proton channel. F(1) has five subunits: alpha(3), beta(3), gamma(1), delta(1), epsilon(1). F(0) has three main subunits: a(1), b(2) and c(10-14). The alpha and beta chains form an alternating ring which encloses part of the gamma chain. F(1) is attached to F(0) by a central stalk formed by the gamma and epsilon chains, while a peripheral stalk is formed by the delta and b chains.

It is found in the cell membrane. Its function is as follows. F(1)F(0) ATP synthase produces ATP from ADP in the presence of a proton or sodium gradient. F-type ATPases consist of two structural domains, F(1) containing the extramembraneous catalytic core and F(0) containing the membrane proton channel, linked together by a central stalk and a peripheral stalk. During catalysis, ATP synthesis in the catalytic domain of F(1) is coupled via a rotary mechanism of the central stalk subunits to proton translocation. Functionally, component of the F(0) channel, it forms part of the peripheral stalk, linking F(1) to F(0). The polypeptide is ATP synthase subunit b (Carboxydothermus hydrogenoformans (strain ATCC BAA-161 / DSM 6008 / Z-2901)).